The following is a 137-amino-acid chain: Methylglyoxal synthase (137 aa).

One can recognise an MGS-like domain in the interval M1 to V137. Substrate-binding positions include H8, K12, T34–T37, and S54–G55. D60 functions as the Proton donor/acceptor in the catalytic mechanism. H87 is a substrate binding site.

Belongs to the methylglyoxal synthase family.

The catalysed reaction is dihydroxyacetone phosphate = methylglyoxal + phosphate. Functionally, catalyzes the formation of methylglyoxal from dihydroxyacetone phosphate. The sequence is that of Methylglyoxal synthase from Bacillus subtilis (strain 168).